Consider the following 553-residue polypeptide: Protein DA1-related 1 (553 aa).

The interval 10–41 (GSSHKFSDGQCNGRYREDRNLEGPRYSAEGSD) is disordered. One can recognise a UIM 1 domain in the interval 42–61 (FDKEEIECAIALSLSEQEHV). The span at 62-77 (IPQDDKGKKIIEYKSE) shows a compositional bias: basic and acidic residues. The tract at residues 62 to 91 (IPQDDKGKKIIEYKSETEEDDDDDEDEDEE) is disordered. The span at 78–91 (TEEDDDDDEDEDEE) shows a compositional bias: acidic residues. The 20-residue stretch at 87-106 (DEDEEYMRAQLEAAEEEERR) folds into the UIM 2 domain. The UIM 3; degenerate domain maps to 122–141 (AQLEETEKLLAKARLEEEEM). The UIM 4 domain maps to 149–168 (EEDELLAKALQESMNVGSPP). A Phosphoserine modification is found at S166. Residues 188–248 (RICVGCQAEI…KLCYKEQHHP (61 aa)) enclose the LIM zinc-binding domain.

In terms of assembly, interacts with ubiquitin, TCP14 and TCP15. Polyubiquitinated by DA2.

Functionally, acts redundantly with DA1 and DAR2 to regulate endoreduplication during leaf development. Together with DA1 and DAR2, modulates the protein stability of the transcription factors TCP14 and TCP15, which repress endoreduplication by directly regulating the expression of cell-cycle genes. The sequence is that of Protein DA1-related 1 from Arabidopsis thaliana (Mouse-ear cress).